The sequence spans 674 residues: Putative kinase-like protein TMKL1 (674 aa).

Residues 1 to 25 (MGMEALRFLHVIFFFVLILHCHCGT) form the signal peptide. Residues 26-295 (SLSGSSDVKL…PLKPCLGSSR (270 aa)) are Extracellular-facing. N-linked (GlcNAc...) asparagine glycosylation is found at Asn57, Asn90, Asn95, and Asn110. LRR repeat units follow at residues 100–122 (HLLSLQLPSANLTGSLPREIGEF), 124–146 (MLQSVFLNINSLSGSIPLELGYT), 148–169 (SLSDVDLSGNALAGVLPPSIWN), and 173–194 (KLVSFKIHGNNLSGVLPEPALP). 2 N-linked (GlcNAc...) asparagine glycosylation sites follow: Asn183 and Asn195. LRR repeat units lie at residues 200–222 (NLQVLDLGGNKFSGEFPEFITRF), 224–244 (GVKSLDLSSNVFEGLVPEGLG), and 247–269 (ELESLNLSHNNFSGMLPDFGESK). Asn252 and Asn257 each carry an N-linked (GlcNAc...) asparagine glycan. A helical transmembrane segment spans residues 296 to 323 (LSPGAVAGLVIGLMSGAVVVASLLIGYL). The Cytoplasmic portion of the chain corresponds to 324–674 (QNKKRKSSIE…ETRSDAETPF (351 aa)). The interval 331–350 (SIESEDDLEEGDEEDEIGEK) is disordered. The span at 333–348 (ESEDDLEEGDEEDEIG) shows a compositional bias: acidic residues. Ser334 is modified (phosphoserine). Residues 373 to 674 (NATGQVMEKT…ETRSDAETPF (302 aa)) enclose the Protein kinase domain. The residue at position 375 (Thr375) is a Phosphothreonine. Position 454 is a phosphoserine (Ser454). The disordered stretch occupies residues 649–674 (LEENRPRNRSALYSPTETRSDAETPF).

The protein belongs to the protein kinase superfamily.

It localises to the membrane. Functionally, does not seem to have conserved a kinase activity. This Arabidopsis thaliana (Mouse-ear cress) protein is Putative kinase-like protein TMKL1 (TMKL1).